The primary structure comprises 366 residues: Ribosomal RNA large subunit methyltransferase M (366 aa).

Residues Ser-188, 221 to 224, Asp-240, Asp-260, and Asp-277 each bind S-adenosyl-L-methionine; that span reads CPGG. Lys-306 (proton acceptor) is an active-site residue.

It belongs to the class I-like SAM-binding methyltransferase superfamily. RNA methyltransferase RlmE family. RlmM subfamily. Monomer.

It is found in the cytoplasm. The enzyme catalyses cytidine(2498) in 23S rRNA + S-adenosyl-L-methionine = 2'-O-methylcytidine(2498) in 23S rRNA + S-adenosyl-L-homocysteine + H(+). In terms of biological role, catalyzes the 2'-O-methylation at nucleotide C2498 in 23S rRNA. The chain is Ribosomal RNA large subunit methyltransferase M from Dickeya chrysanthemi (strain Ech1591) (Dickeya zeae (strain Ech1591)).